A 101-amino-acid polypeptide reads, in one-letter code: Small ribosomal subunit protein uS14 (101 aa).

It belongs to the universal ribosomal protein uS14 family. As to quaternary structure, part of the 30S ribosomal subunit. Contacts proteins S3 and S10.

Binds 16S rRNA, required for the assembly of 30S particles and may also be responsible for determining the conformation of the 16S rRNA at the A site. The protein is Small ribosomal subunit protein uS14 of Escherichia coli O8 (strain IAI1).